The sequence spans 96 residues: Cysteine protease immunity 1 (96 aa).

This chain is Cysteine protease immunity 1, found in Escherichia coli O1:K1:H7 (strain ATCC 11775 / DSM 30083 / JCM 1649 / NBRC 102203 / NCTC 9001 / U5/41).